The primary structure comprises 334 residues: Glyceraldehyde-3-phosphate dehydrogenase (334 aa).

NAD(+)-binding positions include 12 to 13 (RI), Asp-35, Arg-79, and Ser-121. Residues 152-154 (SCT), Thr-183, Arg-198, 211-212 (TG), and Arg-234 each bind D-glyceraldehyde 3-phosphate. Catalysis depends on Cys-153, which acts as the Nucleophile. Asn-315 is an NAD(+) binding site.

Belongs to the glyceraldehyde-3-phosphate dehydrogenase family. In terms of assembly, homotetramer.

It is found in the cytoplasm. The catalysed reaction is D-glyceraldehyde 3-phosphate + phosphate + NAD(+) = (2R)-3-phospho-glyceroyl phosphate + NADH + H(+). Its pathway is carbohydrate degradation; glycolysis; pyruvate from D-glyceraldehyde 3-phosphate: step 1/5. Functionally, catalyzes the oxidative phosphorylation of glyceraldehyde 3-phosphate (G3P) to 1,3-bisphosphoglycerate (BPG) using the cofactor NAD. The first reaction step involves the formation of a hemiacetal intermediate between G3P and a cysteine residue, and this hemiacetal intermediate is then oxidized to a thioester, with concomitant reduction of NAD to NADH. The reduced NADH is then exchanged with the second NAD, and the thioester is attacked by a nucleophilic inorganic phosphate to produce BPG. The sequence is that of Glyceraldehyde-3-phosphate dehydrogenase (gap) from Corynebacterium glutamicum (strain ATCC 13032 / DSM 20300 / JCM 1318 / BCRC 11384 / CCUG 27702 / LMG 3730 / NBRC 12168 / NCIMB 10025 / NRRL B-2784 / 534).